The following is a 158-amino-acid chain: Heavy metal-associated isoprenylated plant protein 23 (158 aa).

Positions Phe31–Glu94 constitute an HMA domain. A metal cation-binding residues include Cys42 and Cys45. At Cys155 the chain carries Cysteine methyl ester. Residue Cys155 is the site of S-farnesyl cysteine attachment. The propeptide at Ser156–Met158 is removed in mature form.

The protein belongs to the HIPP family. In terms of assembly, interacts with ZHD11/HB29.

Functionally, heavy-metal-binding protein. The protein is Heavy metal-associated isoprenylated plant protein 23 of Arabidopsis thaliana (Mouse-ear cress).